A 310-amino-acid chain; its full sequence is Putative S-adenosyl-L-methionine-dependent methyltransferase MAP_2076c (310 aa).

Residues Asp-131 and 160–161 (DL) contribute to the S-adenosyl-L-methionine site.

Belongs to the UPF0677 family.

In terms of biological role, exhibits S-adenosyl-L-methionine-dependent methyltransferase activity. This is Putative S-adenosyl-L-methionine-dependent methyltransferase MAP_2076c from Mycolicibacterium paratuberculosis (strain ATCC BAA-968 / K-10) (Mycobacterium paratuberculosis).